The following is a 165-amino-acid chain: DNA mimic protein DMP19 (165 aa).

This sequence belongs to the DMP19-like protein family. Monomer. Homodimer. The monomeric form of DMP19 interacts with the DNA-binding protein HU homodimer with 1:1 stoichiometry. The dimeric form of DMP19 interacts with the Neisseria hypothetical transcription factor (NHTF) dimer.

With respect to regulation, activity can be modulated in vitro by crown ethers, which are small cyclic polyethers that can modify protein surface behavior dramatically by stabilizing either intra- or intermolecular interactions, thereby probably altering the protein's tertiary and quaternary structure. Functionally, acts as a DNA mimic. Interacts with DNA-binding proteins and prevents their binding to DNA by occupying the DNA binding sites on the proteins, acting as a competitive inhibitor. DMP19 is a bifunctional DNA mimic protein involved in controlling nucleoid formation as well as gene regulation. This bifunctionality depends on different oligomeric states. The monomeric form interacts with the DNA-binding protein HU, which prevents HU from binding to DNA and forming nucleoids. The dimeric form interacts with the Neisseria hypothetical transcription factor (NHTF) and prevents NHTF from binding to its DNA-binding sites, thereby blocking its repressor activity and influencing expression of the target genes. DMP19 might use these different oligomerizations to regulate genes in two steps: the monomeric form may first release selected gene regions in chromosomal DNA by preventing HU from binding to DNA and forming nucleoids, then the dimeric form blocks the gene repressor activity of NHTF and ensures the continued expression of NHTF-controlled genes. The sequence is that of DNA mimic protein DMP19 from Neisseria meningitidis serogroup B (strain ATCC BAA-335 / MC58).